The chain runs to 117 residues: Large ribosomal subunit protein bL20c (117 aa).

Belongs to the bacterial ribosomal protein bL20 family.

It is found in the plastid. Its subcellular location is the chloroplast. Its function is as follows. Binds directly to 23S ribosomal RNA and is necessary for the in vitro assembly process of the 50S ribosomal subunit. It is not involved in the protein synthesizing functions of that subunit. In Carica papaya (Papaya), this protein is Large ribosomal subunit protein bL20c.